A 317-amino-acid chain; its full sequence is Glutamyl-tRNA reductase-binding protein, chloroplastic (317 aa).

Residues 1–42 (MQLQTQSFALNLLPSPNFAKPIERREFISLKRDPSRPISLRC) constitute a chloroplast transit peptide.

As to quaternary structure, interacts with HEMA1 and forms a heterotetramer of two GLUTRBP and two HEMA1 subunits.

The protein localises to the plastid. It is found in the chloroplast stroma. In terms of biological role, involved in the regulation of glutamyl-tRNA reductase (GluTR) which is important for the synthesis and distribution of 5-aminolevulinate, a precursor in heme and chlorophyll biosynthesis. Stimulates GluTR activity and regulates glutamate-1-semialdehyde release. May play a role in heme metabolism. Necessary for efficient photosynthetic electron transport in chloroplasts. This Arabidopsis thaliana (Mouse-ear cress) protein is Glutamyl-tRNA reductase-binding protein, chloroplastic.